The primary structure comprises 585 residues: Amyloid protein-binding protein 2 (585 aa).

TPR repeat units follow at residues 50 to 83 (QGRLCQLGSEFCELEVFAKVLRALDKRHLLHHCF), 120 to 153 (IQVGFVLGGFLSDAGWYSDAEKVFLSCLQLCTLH), 206 to 239 (AALYGELCALLFAKSHYDEAYKWCVEAMKEITAG), 288 to 321 (SDTLLDYGFYLLNVDNICQSVAIYQAALDIRQSV), 333 to 367 (HEDLAYSSYVHQYSSGKFDNALFHAERAIGIITHI), 429 to 462 (AKHYGNLGRLYQSMRKFKEAEEMHIKAIQIKEQL), 471 to 505 (ALSVGHLASLYNYDMNQYENAEKLYLRSIAIGKKL), and 514 to 547 (EYDYRGLIKLYNSIGNYEKVFEYHNVLSNWNRLR).

Component of a CRL2 E3 ubiquitin-protein ligase complex, also named ECS (Elongin BC-CUL2/5-SOCS-box protein) complex, composed of CUL2, Elongin BC (ELOB and ELOC), RBX1 and substrate-specific adapter APPBP2. Interacts with APP; APP interaction inhibits the E3 ubiquitin-protein ligase activity of the CRL2(APPBP2) complex. In terms of processing, rapidly degraded by the proteasome upon overexpression of a C-terminal fragment of APP.

The protein localises to the nucleus. It localises to the cytoplasm. The protein resides in the cytoskeleton. Its subcellular location is the membrane. It functions in the pathway protein modification; protein ubiquitination. Its activity is regulated as follows. E3 ubiquitin-protein ligase activity of the CRL2(APPBP2) complex is inhibited by APP. Its function is as follows. Substrate-recognition component of a Cul2-RING (CRL2) E3 ubiquitin-protein ligase complex of the DesCEND (destruction via C-end degrons) pathway, which recognizes a C-degron located at the extreme C terminus of target proteins, leading to their ubiquitination and degradation. The C-degron recognized by the DesCEND pathway is usually a motif of less than ten residues and can be present in full-length proteins, truncated proteins or proteolytically cleaved forms. The CRL2(APPBP2) complex specifically recognizes proteins with a -Arg-Xaa-Xaa-Gly degron at the C-terminus, leading to their ubiquitination and degradation. The CRL2(APPBP2) complex mediates ubiquitination and degradation of truncated SELENOV selenoproteins produced by failed UGA/Sec decoding, which end with a -Arg-Xaa-Xaa-Gly degron. May play a role in intracellular protein transport: may be involved in the translocation of APP along microtubules toward the cell surface. This chain is Amyloid protein-binding protein 2, found in Mus musculus (Mouse).